The chain runs to 602 residues: VIN3-like protein 1 (602 aa).

Residues 1-38 are disordered; the sequence is MDSSSTKSKISHSRKTNKKSNKKHESNGKQQQQQDVDG. The segment covering 9-22 has biased composition (basic residues); it reads KISHSRKTNKKSNK. The segment at 67–137 adopts a PHD-type zinc-finger fold; the sequence is RCSCCVCHNF…CFCCYSCGKV (71 aa). The Nuclear localization signal signature appears at 144–151; sequence WKKQLVAA. One can recognise a Fibronectin type-III domain in the interval 242 to 340; the sequence is VPAACRFHFE…AMCFTKSVEI (99 aa). The tract at residues 430–470 is disordered; that stretch reads LNEEFTPPDSSGGEDNGVPLNSLAEADGGDHDDNCDDAVSN. Residues 502 to 602 are VIN3-Interacting Domain (VID); sequence AISDSNDSEN…RPNNGVMTSH (101 aa).

As to quaternary structure, interacts with VIN3 and VIL2. The heterodimer made of VIN3 and VIL1 is required for establishing the vernalization-induced epigenetic silencing of FLC. Component of the plant homeodomain / polycomb repressive complex 2 (PHD-PRC2) large complex during prolonged cold, composed of core PRC2 components (VRN2, EZA1, FIE and MSI1), and three related PHD finger proteins (VIL1, VIL2 and VIN3) that mediates histone H3 trimethylation on 'Lys-27' (H3K27me3). In terms of tissue distribution, accumulates in shoot and root apices, and in leaves.

It localises to the nucleus. Its subcellular location is the nucleus speckle. In terms of biological role, involved in both the vernalization and photoperiod pathways by regulating expression of the related floral repressors FLOWERING LOCUS C (FLC) and FLOWERING LOCUS M (FLM). Together with VIN3, required during vernalization for the modifications of FLC and FLM chromatin that are associated with an epigenetically silenced state (e.g. chromatin modifications, histone deacetylation, and trimethylated H3 'Lys-4' H3K4me3 and 'Lys-27' H3K27me3) and with acquisition of competence to flower. Promotes flowering in short days (SD=8 hours light/16 hours dark). Associates dynamically at FLC locus; during vernalization, binds to specific sites, but when in warm conditions, distributed along the whole locus. In Arabidopsis thaliana (Mouse-ear cress), this protein is VIN3-like protein 1 (VIL1).